The sequence spans 1863 residues: C-myc promoter-binding protein (1863 aa).

The MABP domain maps to 42–200 (KEPITDVSVI…AVYLCYKKSV (159 aa)). A uDENN domain is found at 192–364 (VYLCYKKSVA…KVPFPSPQRP (173 aa)). One can recognise a cDENN domain in the interval 385-521 (PLPLSGGKFS…PCKNLMNTLN (137 aa)). A dDENN domain is found at 523-641 (LHQQLAKLQQ…CSFVSDKDAS (119 aa)). Ser-731 carries the phosphoserine modification. PPR repeat units follow at residues 772–808 (WFIC…MDPP) and 809–843 (DEVC…GIDP). The tract at residues 905–952 (DLGYNSLSKDEVRRGDTSTEDIQEEKDKKGSDCSSLSESESTKGSADC) is disordered. Positions 912 to 921 (SKDEVRRGDT) are enriched in basic and acidic residues. The Bipartite nuclear localization signal motif lies at 917–933 (RRGDTSTEDIQEEKDKK). Positions 936 to 949 (DCSSLSESESTKGS) are enriched in low complexity. Phosphoserine is present on residues Ser-1015, Ser-1035, Ser-1099, Ser-1151, and Ser-1152. The tract at residues 1075 to 1111 (TRPNTLDIGKPPLRSKRDSLEKESSDDDTPFDGSNYL) is disordered. The tract at residues 1177–1202 (TEQQQKEEEEEDEDDSKSISTPSARR) is disordered. Ser-1225, Ser-1240, and Ser-1251 each carry phosphoserine. Disordered stretches follow at residues 1237–1306 (NKKS…SPSF) and 1348–1375 (SKDQ…TDED). The segment covering 1269-1279 (TKSEEKPRDRL) has biased composition (basic and acidic residues). Ser-1281 carries the phosphoserine modification. Polar residues-rich tracts occupy residues 1297–1306 (DTLTHSSPSF) and 1348–1371 (SKDQ…STSL). Phosphoserine occurs at positions 1508, 1587, 1589, and 1591.

As to expression, expressed ubiquitously. Highest expression in bone marrow, medium in peripheral blood lymphocytes and lowest in spleen. In brain, breast, and prostate, higher expression was seen in normal cells than in tumor cells. Expression is regulated in a growth- and cell cycle-dependent manner.

It localises to the nucleus. In terms of biological role, probable guanine nucleotide exchange factor (GEF) which may activate RAB10. Promotes the exchange of GDP to GTP, converting inactive GDP-bound Rab proteins into their active GTP-bound form. According to PubMed:8056341, it may bind to ISRE-like element (interferon-stimulated response element) of MYC P2 promoter. The protein is C-myc promoter-binding protein (DENND4A) of Homo sapiens (Human).